The chain runs to 37 residues: MKVNPSVKPMCDKCRVIRRHRRVMVICVDPRHKQRQG.

Belongs to the bacterial ribosomal protein bL36 family.

In Mycobacterium leprae (strain Br4923), this protein is Large ribosomal subunit protein bL36.